The sequence spans 901 residues: Alanine--tRNA ligase (901 aa).

Residues histidine 600, histidine 604, cysteine 704, and histidine 708 each contribute to the Zn(2+) site.

It belongs to the class-II aminoacyl-tRNA synthetase family. The cofactor is Zn(2+).

The protein resides in the cytoplasm. The catalysed reaction is tRNA(Ala) + L-alanine + ATP = L-alanyl-tRNA(Ala) + AMP + diphosphate. In terms of biological role, catalyzes the attachment of alanine to tRNA(Ala) in a two-step reaction: alanine is first activated by ATP to form Ala-AMP and then transferred to the acceptor end of tRNA(Ala). Also edits incorrectly charged Ser-tRNA(Ala) and Gly-tRNA(Ala) via its editing domain. This Ignicoccus hospitalis (strain KIN4/I / DSM 18386 / JCM 14125) protein is Alanine--tRNA ligase.